We begin with the raw amino-acid sequence, 252 residues long: 5'-nucleotidase SurE (252 aa).

A divalent metal cation-binding residues include D8, D9, S39, and N95.

The protein belongs to the SurE nucleotidase family. A divalent metal cation is required as a cofactor.

It localises to the cytoplasm. The catalysed reaction is a ribonucleoside 5'-phosphate + H2O = a ribonucleoside + phosphate. Its function is as follows. Nucleotidase that shows phosphatase activity on nucleoside 5'-monophosphates. This Thermoanaerobacter sp. (strain X514) protein is 5'-nucleotidase SurE.